Here is a 414-residue protein sequence, read N- to C-terminus: Tyrosine--tRNA ligase (414 aa).

Tyr38 is a binding site for L-tyrosine. The short motif at 43–52 is the 'HIGH' region element; it reads CTARSLHIGS. L-tyrosine-binding residues include Tyr172 and Gln176. The 'KMSKS' region motif lies at 232–236; sequence KMGKT. Lys235 provides a ligand contact to ATP. The S4 RNA-binding domain maps to 345–412; sequence ISVAKLLQLA…GKKRRIKVVV (68 aa).

The protein belongs to the class-I aminoacyl-tRNA synthetase family. TyrS type 1 subfamily. In terms of assembly, homodimer.

The protein localises to the cytoplasm. The enzyme catalyses tRNA(Tyr) + L-tyrosine + ATP = L-tyrosyl-tRNA(Tyr) + AMP + diphosphate + H(+). In terms of biological role, catalyzes the attachment of tyrosine to tRNA(Tyr) in a two-step reaction: tyrosine is first activated by ATP to form Tyr-AMP and then transferred to the acceptor end of tRNA(Tyr). This Anaplasma marginale (strain St. Maries) protein is Tyrosine--tRNA ligase.